The following is a 450-amino-acid chain: 23S rRNA (uracil(1939)-C(5))-methyltransferase RlmD (450 aa).

The region spanning 15 to 73 (KAVPAKNLTVTVASLDPFGQGVARHEGKTVFVTGVLPGEQAEVQLTEEKRQFSHAKLKR) is the TRAM domain. Residues Cys86, Cys92, Cys95, and Cys173 each contribute to the [4Fe-4S] cluster site. S-adenosyl-L-methionine-binding residues include Gln276, Phe305, Asn310, Glu326, Asn353, and Asp374. Cys400 acts as the Nucleophile in catalysis.

Belongs to the class I-like SAM-binding methyltransferase superfamily. RNA M5U methyltransferase family. RlmD subfamily.

The catalysed reaction is uridine(1939) in 23S rRNA + S-adenosyl-L-methionine = 5-methyluridine(1939) in 23S rRNA + S-adenosyl-L-homocysteine + H(+). In terms of biological role, catalyzes the formation of 5-methyl-uridine at position 1939 (m5U1939) in 23S rRNA. This is 23S rRNA (uracil(1939)-C(5))-methyltransferase RlmD from Pectobacterium atrosepticum (strain SCRI 1043 / ATCC BAA-672) (Erwinia carotovora subsp. atroseptica).